Reading from the N-terminus, the 210-residue chain is Cuticle collagen 2C (210 aa).

Positions 11-210 (CTGGQAGPPG…GVFFEDGTRR (200 aa)) are disordered. Composition is skewed to pro residues over residues 40-76 (PGRPPVQPCDPIPIPPCKPCPQGRPGPPGPIGPPGEP) and 88-103 (DAPPGPPGPKGPPGPP). Positions 105 to 122 (KAGAPGAAGQPGANAPSE) are enriched in low complexity. Residues 123–144 (PLVPGPPGPPGPTGPEGPPGPN) show a composition bias toward pro residues. Over residues 167–179 (HPGAPGNAGHPGQ) the composition is skewed to low complexity.

Belongs to the cuticular collagen family.

In terms of biological role, nematode cuticles are composed largely of collagen-like proteins. The cuticle functions both as an exoskeleton and as a barrier to protect the worm from its environment. In Haemonchus contortus (Barber pole worm), this protein is Cuticle collagen 2C (2C).